A 155-amino-acid polypeptide reads, in one-letter code: Small ribosomal subunit protein uS7 (155 aa).

Belongs to the universal ribosomal protein uS7 family. As to quaternary structure, part of the 30S ribosomal subunit. Contacts proteins S9 and S11.

In terms of biological role, one of the primary rRNA binding proteins, it binds directly to 16S rRNA where it nucleates assembly of the head domain of the 30S subunit. Is located at the subunit interface close to the decoding center, probably blocks exit of the E-site tRNA. The polypeptide is Small ribosomal subunit protein uS7 (Chlorobium chlorochromatii (strain CaD3)).